We begin with the raw amino-acid sequence, 333 residues long: Ketol-acid reductoisomerase (NADP(+)) (333 aa).

The KARI N-terminal Rossmann domain maps to 1 to 171 (MSNDTQPKIA…GGARANIIKT (171 aa)). NADP(+) contacts are provided by residues 14-17 (YGSQ), arginine 37, threonine 42, and 72-75 (DMVQ). The active site involves histidine 97. Glycine 123 contributes to the NADP(+) binding site. The KARI C-terminal knotted domain maps to 172 to 317 (TFKEETETDL…KKLRAKMVWL (146 aa)). Positions 180, 184, 216, and 220 each coordinate Mg(2+). Serine 241 is a binding site for substrate.

The protein belongs to the ketol-acid reductoisomerase family. It depends on Mg(2+) as a cofactor.

It catalyses the reaction (2R)-2,3-dihydroxy-3-methylbutanoate + NADP(+) = (2S)-2-acetolactate + NADPH + H(+). The enzyme catalyses (2R,3R)-2,3-dihydroxy-3-methylpentanoate + NADP(+) = (S)-2-ethyl-2-hydroxy-3-oxobutanoate + NADPH + H(+). Its pathway is amino-acid biosynthesis; L-isoleucine biosynthesis; L-isoleucine from 2-oxobutanoate: step 2/4. The protein operates within amino-acid biosynthesis; L-valine biosynthesis; L-valine from pyruvate: step 2/4. Involved in the biosynthesis of branched-chain amino acids (BCAA). Catalyzes an alkyl-migration followed by a ketol-acid reduction of (S)-2-acetolactate (S2AL) to yield (R)-2,3-dihydroxy-isovalerate. In the isomerase reaction, S2AL is rearranged via a Mg-dependent methyl migration to produce 3-hydroxy-3-methyl-2-ketobutyrate (HMKB). In the reductase reaction, this 2-ketoacid undergoes a metal-dependent reduction by NADPH to yield (R)-2,3-dihydroxy-isovalerate. The polypeptide is Ketol-acid reductoisomerase (NADP(+)) (Xanthomonas euvesicatoria pv. vesicatoria (strain 85-10) (Xanthomonas campestris pv. vesicatoria)).